Here is a 247-residue protein sequence, read N- to C-terminus: DNA polymerase sliding clamp (247 aa).

Belongs to the PCNA family. Homotrimer. The subunits circularize to form a toroid; DNA passes through its center. Replication factor C (RFC) is required to load the toroid on the DNA.

Sliding clamp subunit that acts as a moving platform for DNA processing. Responsible for tethering the catalytic subunit of DNA polymerase and other proteins to DNA during high-speed replication. This chain is DNA polymerase sliding clamp, found in Methanoregula boonei (strain DSM 21154 / JCM 14090 / 6A8).